Here is a 431-residue protein sequence, read N- to C-terminus: Glutamate-1-semialdehyde 2,1-aminomutase (431 aa).

The residue at position 266 (lysine 266) is an N6-(pyridoxal phosphate)lysine.

The protein belongs to the class-III pyridoxal-phosphate-dependent aminotransferase family. HemL subfamily. As to quaternary structure, homodimer. The cofactor is pyridoxal 5'-phosphate.

Its subcellular location is the cytoplasm. It catalyses the reaction (S)-4-amino-5-oxopentanoate = 5-aminolevulinate. Its pathway is porphyrin-containing compound metabolism; protoporphyrin-IX biosynthesis; 5-aminolevulinate from L-glutamyl-tRNA(Glu): step 2/2. The chain is Glutamate-1-semialdehyde 2,1-aminomutase from Wolinella succinogenes (strain ATCC 29543 / DSM 1740 / CCUG 13145 / JCM 31913 / LMG 7466 / NCTC 11488 / FDC 602W) (Vibrio succinogenes).